The primary structure comprises 694 residues: MSSQWDEDSDADILELANKPPRGTQLTQIESHAETETCGNDESGTGARTHEDLDKLQMDLMTARGESGMLRDRLMMLQQEKDRERERLLGREQELQGRHLQELQKLQEELQRLEDEKQFLVLEKRQLVKGHIAAGLPAQDIQDDSTEVSAKRRKTEDSLVQTYVTLNHTRVVTGDSSLFLDHMVLFKLHGSDMTVLDMLDHISLESPASCSMLVIPSGEPLGKPIHMMLLRLKSMHPLDKMIDIVLENLAMLIKKIMQGKDCRFAVPFLVAYMHQALSFRPSAVHVHALKDLFQFSSDLAIKFQPLLKSPLHASPLELGVEPNIFQYELLDTLSLFYCFDVMELCVKYLLQCSPESQKSFFDEIIWKNITKVMQLSLTISYKSILNVVFSMVEILRALSELITPEELSTVQWWDSAISKLFQLWNRQVSNANLHDNDNLHVLPKHNFPGLNRCLGDSTNVHLIEELIDTKAVQAIPEVIYRDFPPFSRECKIRIEGWGLQLHKATVNILQQLLLRYGKQLAHAELLHQTAKFLCREQELLLVVRLTADSHNSDMRITLAEELIRLLYHAWQEHEEPSKAITEVQNELIACLWRVVFGHMSNRDPQTQPELDALLLDSFHGLSLKEQHDLYDDVFDQPAAQAFLARELAAENVLRCETQFSGCHAYTCREMAKSVLESIISLEDTDSLFLAMVSE.

Residues 1–13 show a composition bias toward acidic residues; it reads MSSQWDEDSDADI. A disordered region spans residues 1–26; it reads MSSQWDEDSDADILELANKPPRGTQL. Residues 68–130 adopt a coiled-coil conformation; that stretch reads GMLRDRLMML…VLEKRQLVKG (63 aa).

In terms of assembly, forms a complex with MEC1.

The protein resides in the cytoplasm. Its subcellular location is the nucleus. In terms of biological role, forms a complex with the serine/threonine kinase MEC1 which activates checkpoint signaling upon genotoxic stresses. The MEC1-LCD1 complex is recruited to DNA lesions in order to initiates the DNA repair by homologous recombination. Required for cell growth and meiotic recombination. In Eremothecium gossypii (strain ATCC 10895 / CBS 109.51 / FGSC 9923 / NRRL Y-1056) (Yeast), this protein is DNA damage checkpoint protein LCD1 (LCD1).